The following is a 221-amino-acid chain: Thiamine-phosphate synthase (221 aa).

Residues 47 to 51 (QYREK) and N79 each bind 4-amino-2-methyl-5-(diphosphooxymethyl)pyrimidine. 2 residues coordinate Mg(2+): D80 and D99. Position 118 (T118) interacts with 4-amino-2-methyl-5-(diphosphooxymethyl)pyrimidine. 144 to 146 (SFT) serves as a coordination point for 2-[(2R,5Z)-2-carboxy-4-methylthiazol-5(2H)-ylidene]ethyl phosphate. Residue K147 participates in 4-amino-2-methyl-5-(diphosphooxymethyl)pyrimidine binding. 2-[(2R,5Z)-2-carboxy-4-methylthiazol-5(2H)-ylidene]ethyl phosphate is bound by residues G175 and 195–196 (VT).

This sequence belongs to the thiamine-phosphate synthase family. Mg(2+) is required as a cofactor.

It carries out the reaction 2-[(2R,5Z)-2-carboxy-4-methylthiazol-5(2H)-ylidene]ethyl phosphate + 4-amino-2-methyl-5-(diphosphooxymethyl)pyrimidine + 2 H(+) = thiamine phosphate + CO2 + diphosphate. The enzyme catalyses 2-(2-carboxy-4-methylthiazol-5-yl)ethyl phosphate + 4-amino-2-methyl-5-(diphosphooxymethyl)pyrimidine + 2 H(+) = thiamine phosphate + CO2 + diphosphate. The catalysed reaction is 4-methyl-5-(2-phosphooxyethyl)-thiazole + 4-amino-2-methyl-5-(diphosphooxymethyl)pyrimidine + H(+) = thiamine phosphate + diphosphate. It functions in the pathway cofactor biosynthesis; thiamine diphosphate biosynthesis; thiamine phosphate from 4-amino-2-methyl-5-diphosphomethylpyrimidine and 4-methyl-5-(2-phosphoethyl)-thiazole: step 1/1. Its function is as follows. Condenses 4-methyl-5-(beta-hydroxyethyl)thiazole monophosphate (THZ-P) and 2-methyl-4-amino-5-hydroxymethyl pyrimidine pyrophosphate (HMP-PP) to form thiamine monophosphate (TMP). This chain is Thiamine-phosphate synthase, found in Caldicellulosiruptor saccharolyticus (strain ATCC 43494 / DSM 8903 / Tp8T 6331).